The following is a 432-amino-acid chain: Trigger factor (432 aa).

In terms of domain architecture, PPIase FKBP-type spans glutamate 161–proline 246.

The protein belongs to the FKBP-type PPIase family. Tig subfamily. As to quaternary structure, homodimer and monomer. In vivo most of the ribosomes are in complex with monomeric TF. Uncomplexed TF, however, is in a monomer-dimer equilibrium with approximately two thirds of TF existing in a dimeric state.

It localises to the cytoplasm. The enzyme catalyses [protein]-peptidylproline (omega=180) = [protein]-peptidylproline (omega=0). Functionally, involved in protein export. Acts as a chaperone by maintaining the newly synthesized protein in an open conformation. Functions as a peptidyl-prolyl cis-trans isomerase. The polypeptide is Trigger factor (Escherichia coli O127:H6 (strain E2348/69 / EPEC)).